The sequence spans 356 residues: tRNA N6-adenosine threonylcarbamoyltransferase (356 aa).

The Fe cation site is built by H115 and H119. Residues 138–142, D171, G184, and N283 each bind substrate; that span reads LVSGG. Residue D311 participates in Fe cation binding.

This sequence belongs to the KAE1 / TsaD family. Fe(2+) serves as cofactor.

It is found in the cytoplasm. It catalyses the reaction L-threonylcarbamoyladenylate + adenosine(37) in tRNA = N(6)-L-threonylcarbamoyladenosine(37) in tRNA + AMP + H(+). Required for the formation of a threonylcarbamoyl group on adenosine at position 37 (t(6)A37) in tRNAs that read codons beginning with adenine. Is involved in the transfer of the threonylcarbamoyl moiety of threonylcarbamoyl-AMP (TC-AMP) to the N6 group of A37, together with TsaE and TsaB. TsaD likely plays a direct catalytic role in this reaction. The chain is tRNA N6-adenosine threonylcarbamoyltransferase from Prochlorococcus marinus (strain MIT 9313).